The primary structure comprises 215 residues: Large ribosomal subunit protein uL16 (215 aa).

Belongs to the universal ribosomal protein uL16 family. In terms of assembly, component of the large ribosomal subunit.

The protein resides in the cytoplasm. Its function is as follows. Component of the large ribosomal subunit. Plays a role in the formation of actively translating ribosomes. Plays a role in the embryonic brain development. This Danio rerio (Zebrafish) protein is Large ribosomal subunit protein uL16.